The following is a 126-amino-acid chain: Glycine cleavage system H protein (126 aa).

One can recognise a Lipoyl-binding domain in the interval 22-104; it reads TVTIGVTDFA…YGEGWMIKIK (83 aa). K63 bears the N6-lipoyllysine mark.

It belongs to the GcvH family. As to quaternary structure, the glycine cleavage system is composed of four proteins: P, T, L and H. It depends on (R)-lipoate as a cofactor.

In terms of biological role, the glycine cleavage system catalyzes the degradation of glycine. The H protein shuttles the methylamine group of glycine from the P protein to the T protein. In Christiangramia forsetii (strain DSM 17595 / CGMCC 1.15422 / KT0803) (Gramella forsetii), this protein is Glycine cleavage system H protein.